The sequence spans 329 residues: Tryptophan--tRNA ligase (329 aa).

ATP-binding positions include 9–11 and 17–18; these read QPS and GN. The 'HIGH' region signature appears at 10-18; the sequence is PSGIPTIGN. L-tryptophan is bound at residue Asp133. ATP is bound by residues 145–147, Val184, and 193–197; these read GDD and KMSKS. Residues 193–197 carry the 'KMSKS' region motif; the sequence is KMSKS.

The protein belongs to the class-I aminoacyl-tRNA synthetase family. In terms of assembly, homodimer.

The protein resides in the cytoplasm. The enzyme catalyses tRNA(Trp) + L-tryptophan + ATP = L-tryptophyl-tRNA(Trp) + AMP + diphosphate + H(+). In terms of biological role, catalyzes the attachment of tryptophan to tRNA(Trp). The sequence is that of Tryptophan--tRNA ligase from Staphylococcus epidermidis (strain ATCC 35984 / DSM 28319 / BCRC 17069 / CCUG 31568 / BM 3577 / RP62A).